We begin with the raw amino-acid sequence, 256 residues long: MRILLTNDDGIHAEGLSVLERIARTITDDVWVVAPEVDQSGLAHSLTLSEPLRLRPVSERRFALRGTPTDCVIMAVKKILDRKPDLVLSGVNIGANLADDVTYSGTVAGAIEGTLQGIRSMALSQAYHYAVGREVPWDVAETHAPALIRTLMDVDLPDGTLVNLNFPNCAVDSVAGVEVTSQGKLDFGLSIDERTDGRGFPYFWLRFGERAGDFRSGTDIRALRDNKISVTPLKLDMTDHAVQDLIARALRKGTVA.

D8, D9, S40, and N92 together coordinate a divalent metal cation.

Belongs to the SurE nucleotidase family. A divalent metal cation is required as a cofactor.

It is found in the cytoplasm. It catalyses the reaction a ribonucleoside 5'-phosphate + H2O = a ribonucleoside + phosphate. In terms of biological role, nucleotidase that shows phosphatase activity on nucleoside 5'-monophosphates. The chain is 5'-nucleotidase SurE from Sinorhizobium medicae (strain WSM419) (Ensifer medicae).